The primary structure comprises 314 residues: Probable cell division protein WhiA (314 aa).

The segment at residues 274 to 305 (SLAELGDRLEISKSGANHRMRKLKALEDMINA) is a DNA-binding region (H-T-H motif).

Belongs to the WhiA family.

Functionally, involved in cell division and chromosome segregation. This chain is Probable cell division protein WhiA, found in Leuconostoc citreum (strain KM20).